The primary structure comprises 524 residues: uncharacterized protein (524 aa).

Positions 1-26 are cleaved as a signal peptide; the sequence is MLKIDMWFKLKSLGFSLISLQALLAS. C27 carries the N-palmitoyl cysteine lipid modification. A lipid anchor (S-diacylglycerol cysteine) is attached at C27. The tract at residues 37-68 is disordered; the sequence is IEEKNDSTTDNNATPFKDEQSDQGTEVNQQPK. Residues 58–68 are compositionally biased toward polar residues; that stretch reads DQGTEVNQQPK.

The protein belongs to the MG067/MG068/MG395 family.

It is found in the cell membrane. This is an uncharacterized protein from Mycoplasma genitalium (strain ATCC 33530 / DSM 19775 / NCTC 10195 / G37) (Mycoplasmoides genitalium).